The following is a 352-amino-acid chain: Protein RecA (352 aa).

ATP is bound at residue 67-74 (GPESSGKT).

It belongs to the RecA family.

It is found in the cytoplasm. Functionally, can catalyze the hydrolysis of ATP in the presence of single-stranded DNA, the ATP-dependent uptake of single-stranded DNA by duplex DNA, and the ATP-dependent hybridization of homologous single-stranded DNAs. It interacts with LexA causing its activation and leading to its autocatalytic cleavage. This is Protein RecA from Enterobacter sp. (strain 638).